Reading from the N-terminus, the 191-residue chain is Cytochrome c oxidase assembly protein CtaG (191 aa).

Residues 1–9 (MSLSPHQKT) lie on the Cytoplasmic side of the membrane. Residues 10–30 (AGGLVLVVAVMGAASFAAVPF) traverse the membrane as a helical; Signal-anchor for type II membrane protein segment. Topologically, residues 31–191 (YNWFCRVTGF…LAAESATDVN (161 aa)) are periplasmic.

This sequence belongs to the COX11/CtaG family.

Its subcellular location is the cell inner membrane. In terms of biological role, exerts its effect at some terminal stage of cytochrome c oxidase synthesis, probably by being involved in the insertion of the copper B into subunit I. The polypeptide is Cytochrome c oxidase assembly protein CtaG (Cereibacter sphaeroides (strain ATCC 17029 / ATH 2.4.9) (Rhodobacter sphaeroides)).